The chain runs to 1217 residues: DNA-directed RNA polymerase subunit beta' (1217 aa).

The Zn(2+) site is built by cysteine 60, cysteine 62, cysteine 75, and cysteine 78. Mg(2+) is bound by residues aspartate 449, aspartate 451, and aspartate 453. 4 residues coordinate Zn(2+): cysteine 818, cysteine 892, cysteine 899, and cysteine 902.

It belongs to the RNA polymerase beta' chain family. The RNAP catalytic core consists of 2 alpha, 1 beta, 1 beta' and 1 omega subunit. When a sigma factor is associated with the core the holoenzyme is formed, which can initiate transcription. Requires Mg(2+) as cofactor. It depends on Zn(2+) as a cofactor.

The catalysed reaction is RNA(n) + a ribonucleoside 5'-triphosphate = RNA(n+1) + diphosphate. In terms of biological role, DNA-dependent RNA polymerase catalyzes the transcription of DNA into RNA using the four ribonucleoside triphosphates as substrates. This chain is DNA-directed RNA polymerase subunit beta', found in Enterococcus faecalis (strain ATCC 700802 / V583).